The following is a 681-amino-acid chain: Propionyl-CoA carboxylase alpha chain (681 aa).

The Biotin carboxylation domain occupies 1-466 (MFNKILIANR…TTAFIAEEYP (466 aa)). Residues Lys-116, 148–209 (SNQI…PRHI), Glu-200, and Asn-235 each bind ATP. The ATP-grasp domain maps to 120–317 (KKIAQEANVS…LVEQMIRVAA (198 aa)). The Mg(2+) site is built by Glu-275, Glu-288, and Asn-290. Residues Glu-275, Glu-288, and Asn-290 each coordinate Mn(2+). The active site involves Glu-288. Phe-348 provides a ligand contact to biotin. Positions 602-681 (LMPEKLPPDT…AVDDVIMEFE (80 aa)) constitute a Biotinyl-binding domain. Lys-647 bears the N6-biotinyllysine mark.

As to quaternary structure, the holoenzyme is a dodecamer composed of 6 PccA/alpha subunits and 6 PccB/beta subunits. Requires Mg(2+) as cofactor. Mn(2+) serves as cofactor. It depends on biotin as a cofactor. The biotin cofactor is covalently attached to the C-terminal biotinyl-binding domain and is required for the catalytic activity.

The enzyme catalyses propanoyl-CoA + hydrogencarbonate + ATP = (S)-methylmalonyl-CoA + ADP + phosphate + H(+). Its pathway is metabolic intermediate metabolism; propanoyl-CoA degradation; succinyl-CoA from propanoyl-CoA: step 1/3. Functionally, this is one of the 2 subunits of the biotin-dependent propionyl-CoA carboxylase (PCC), the enzyme catalyzing the carboxylation of propionyl-CoA/propanoyl-CoA to D-methylmalonyl-CoA/(S)-methylmalonyl-CoA. Within the holoenzyme, the alpha subunit catalyzes the ATP-dependent carboxylation of the biotin carried by the biotin carboxyl carrier (BCC) domain, while the beta subunit then tranfers the carboxyl group from carboxylated biotin to propionyl-CoA. The polypeptide is Propionyl-CoA carboxylase alpha chain (Ruegeria pomeroyi (strain ATCC 700808 / DSM 15171 / DSS-3) (Silicibacter pomeroyi)).